The following is a 172-amino-acid chain: Adenylate kinase isoenzyme 6 (172 aa).

The ATP site is built by G13, G15, K16, T17, and T18. The interval N33–L56 is NMP. Positions N33–L56 are NMPbind. An LID region spans residues T108–D118. The ATP site is built by R109 and K148.

This sequence belongs to the adenylate kinase family. AK6 subfamily. Monomer and homodimer. Interacts with small ribosomal subunit protein uS11. Not a structural component of 43S pre-ribosomes, but transiently interacts with them by binding to uS11. Interacts with COIL (via C-terminus). In terms of tissue distribution, expressed in heart, brain, placenta, lung, liver, skeletal muscle, kidney, pancreas, chorionic villi and the central nervous system.

The protein resides in the cytoplasm. It localises to the nucleus. The protein localises to the nucleoplasm. It is found in the cajal body. It carries out the reaction AMP + ATP = 2 ADP. The enzyme catalyses ATP + H2O = ADP + phosphate + H(+). Broad-specificity nucleoside monophosphate (NMP) kinase that catalyzes the reversible transfer of the terminal phosphate group between nucleoside triphosphates and monophosphates. Also has ATPase activity. Involved in the late cytoplasmic maturation steps of the 40S ribosomal particles, specifically 18S rRNA maturation. While NMP activity is not required for ribosome maturation, ATPase activity is. Associates transiently with small ribosomal subunit protein uS11. ATP hydrolysis breaks the interaction with uS11. May temporarily remove uS11 from the ribosome to enable a conformational change of the ribosomal RNA that is needed for the final maturation step of the small ribosomal subunit. Its NMP activity may have a role in nuclear energy homeostasis. AMP and dAMP are the preferred substrates, but CMP and dCMP are also good substrates. IMP is phosphorylated to a much lesser extent. All nucleoside triphosphates ATP, GTP, UTP, CTP, dATP, dCTP, dGTP, and TTP are accepted as phosphate donors. CTP is the best phosphate donor, followed by UTP, ATP, GTP and dCTP. May be involved in regulation of Cajal body (CB) formation. This chain is Adenylate kinase isoenzyme 6, found in Homo sapiens (Human).